A 659-amino-acid chain; its full sequence is Forkhead box protein P1-B (659 aa).

Polar residues-rich tracts occupy residues 1–16 (MMQE…TAHQ) and 32–41 (KSTTPSSDIT). 2 disordered regions span residues 1 to 41 (MMQE…SDIT) and 229 to 263 (ENSV…NGQY). The C2H2-type zinc finger occupies 289 to 314 (GVCKWPGCEAVFEDFQSFLKHLNNEH). Residues 331 to 352 (VQQLELQLAKDKERLQAMMTHL) are leucine-zipper. Positions 365 to 369 (PLNLV) are CTBP1-binding. The disordered stretch occupies residues 379–413 (PAASPPLSLPQTPTTPTAPLTPLSQTHSVITPTSL). The span at 387-404 (LPQTPTTPTAPLTPLSQT) shows a compositional bias: low complexity. The fork-head DNA-binding region spans 448 to 538 (RPPFTYASLI…PQKISGSPAL (91 aa)). Residues 590 to 659 (GAMDHGNSNG…EDDHGTEDML (70 aa)) are disordered. Polar residues predominate over residues 595-605 (GNSNGSDSSPG). A compositionally biased stretch (basic and acidic residues) spans 641–659 (PDFDHHRDYEDDHGTEDML).

Shows complex and dynamic expression during early embryonic development. Prominent in many regions of the developing central nervous system, particularly in midbrain-hindbrain boundary, hindbrain and spinal cord. Strongly expressed in the retina, ear, branchial arches, hatching gland, heart, pronephric duct, gut, proctodeum, pectoral fin and swim bladder.

The protein localises to the nucleus. Functionally, transcriptional repressor. This is Forkhead box protein P1-B (foxp1b) from Danio rerio (Zebrafish).